The following is a 381-amino-acid chain: Cyclic AMP-AMP-GMP synthase (381 aa).

Residues glutamine 51, serine 53, arginine 56, aspartate 69, aspartate 71, and arginine 109 each coordinate ATP. Residues aspartate 69 and aspartate 71 contribute to the active site. Mg(2+) is bound by residues aspartate 69 and aspartate 71. Aspartate 121 is an active-site residue. Residues aspartate 121 and aspartate 196 each contribute to the Mg(2+) site. ATP is bound by residues aspartate 196, arginine 197, arginine 204, threonine 205, glutamine 210, lysine 233, and tyrosine 250. Residues asparagine 258 and leucine 260 each coordinate Mg(2+). ATP contacts are provided by valine 304 and arginine 307. Residues 348 to 381 form a disordered region; the sequence is GSKFPLPGPQGGDRNGGFTTPSKPAEPQKTGRFA.

Belongs to the CD-NTase family. D02 subfamily. As to quaternary structure, monomer. Crystallizes as a Cap2 homodimer bound on each side by a CdnD monomer. Mg(2+) is required as a cofactor. In terms of processing, in bacteria expressing cap4-dncV-cap2-cap3, this protein is conjugated to a number of other proteins by Cap2, probably via this protein's C-terminal Ala residue. More conjugated DncV is found in the absence of Cap3.

The enzyme catalyses GTP + 2 ATP = 3',3',3'-cAAG + 3 diphosphate. Primed for activation by Cap2 which conjugates it to cellular proteins; activation is target protein-specific (green fluorescent protein does not activate the enzyme), but which protein(s) activate it is unclear. Functionally, cyclic nucleotide synthase (second messenger synthase) of a CBASS antivirus system. CBASS (cyclic oligonucleotide-based antiphage signaling system) provides immunity against bacteriophages. The CD-NTase protein (CdnD, this protein) synthesizes cyclic nucleotides in response to infection; these serve as specific second messenger signals. The signals activate a diverse range of effectors, leading to bacterial cell death and thus abortive phage infection. A type II-C(AAG) CBASS system. Cyclic trinucleotide synthase that catalyzes the synthesis of 3',3',3'-cyclic AMP-AMP-GMP (cAAG) as the major product, a second messenger for cell signal transduction. Uses ATP as the first donor nucleotide, followed by GTP. Its function is as follows. Protects E.coli against phage T2 infection. When the cdnD-cap2-cap3-cap4 operon is introduced in E.coli there is a more than 10(3) decrease in the efficiency of T2 plaque formation. The operon does not protect against phage T5 and only about 10-fold against T7. Expression of cdnD-cap4 alone protects E.coli against phage T2 infection. The sequence is that of Cyclic AMP-AMP-GMP synthase from Enterobacter hormaechei subsp. hoffmannii (strain UCI 50).